A 351-amino-acid chain; its full sequence is Prostaglandin reductase 2 (351 aa).

Residue 99–100 (FY) participates in substrate binding. NADP(+) is bound by residues 165–168 (GACG), lysine 192, tyrosine 208, asparagine 231, 253–259 (CGQISQY), 287–289 (FLV), and asparagine 337. 288-290 (LVL) lines the substrate pocket.

This sequence belongs to the NADP-dependent oxidoreductase L4BD family. As to quaternary structure, monomer.

It localises to the cytoplasm. The enzyme catalyses 13,14-dihydro-15-oxo-prostaglandin E2 + NAD(+) = 15-oxoprostaglandin E2 + NADH + H(+). It catalyses the reaction 13,14-dihydro-15-oxo-prostaglandin E2 + NADP(+) = 15-oxoprostaglandin E2 + NADPH + H(+). It carries out the reaction 13,14-dihydro-15-oxo-PGF2alpha + NADP(+) = 15-oxoprostaglandin F2alpha + NADPH + H(+). The catalysed reaction is 13,14-dihydro-15-oxo-prostaglandin E1 + NADP(+) = 15-oxoprostaglandin E1 + NADPH + H(+). The enzyme catalyses 13,14-dihydro-15-oxo-prostaglandin F1alpha + NADP(+) = 15-oxoprostaglandin F1alpha + NADPH + H(+). Functionally, functions as 15-oxo-prostaglandin 13-reductase and acts on 15-keto-PGE1, 15-keto-PGE2, 15-keto-PGE1-alpha and 15-keto-PGE2-alpha with highest activity towards 15-keto-PGE2. Overexpression represses transcriptional activity of PPARG and inhibits adipocyte differentiation. The polypeptide is Prostaglandin reductase 2 (PTGR2) (Bos taurus (Bovine)).